A 176-amino-acid chain; its full sequence is NAD(P)H-quinone oxidoreductase subunit J (176 aa).

The tract at residues 1–32 is disordered; sequence MEKEGLAKSSDTSIKKEGFISQSLSKDGIPNQ. The span at 20–32 shows a compositional bias: polar residues; the sequence is ISQSLSKDGIPNQ.

It belongs to the complex I 30 kDa subunit family. NDH-1 can be composed of about 15 different subunits; different subcomplexes with different compositions have been identified which probably have different functions.

The protein localises to the cellular thylakoid membrane. It carries out the reaction a plastoquinone + NADH + (n+1) H(+)(in) = a plastoquinol + NAD(+) + n H(+)(out). It catalyses the reaction a plastoquinone + NADPH + (n+1) H(+)(in) = a plastoquinol + NADP(+) + n H(+)(out). Functionally, NDH-1 shuttles electrons from an unknown electron donor, via FMN and iron-sulfur (Fe-S) centers, to quinones in the respiratory and/or the photosynthetic chain. The immediate electron acceptor for the enzyme in this species is believed to be plastoquinone. Couples the redox reaction to proton translocation, and thus conserves the redox energy in a proton gradient. Cyanobacterial NDH-1 also plays a role in inorganic carbon-concentration. This is NAD(P)H-quinone oxidoreductase subunit J from Prochlorococcus marinus (strain MIT 9215).